The following is a 350-amino-acid chain: Small ribosomal subunit protein uS3 (350 aa).

The region spanning 38-106 (IRKMMSRGME…QVQLNILEVK (69 aa)) is the KH type-2 domain. The interval 211–350 (AEREAQEALQ…TPGTPEKAEE (140 aa)) is disordered. Positions 222–232 (QTRRDRPRRGP) are enriched in basic residues. Low complexity predominate over residues 261 to 350 (NAPAAETAAS…TPGTPEKAEE (90 aa)).

This sequence belongs to the universal ribosomal protein uS3 family. As to quaternary structure, part of the 30S ribosomal subunit. Forms a tight complex with proteins S10 and S14.

Functionally, binds the lower part of the 30S subunit head. Binds mRNA in the 70S ribosome, positioning it for translation. This chain is Small ribosomal subunit protein uS3, found in Frankia alni (strain DSM 45986 / CECT 9034 / ACN14a).